The chain runs to 380 residues: Serpin B7 (380 aa).

A phosphoserine mark is found at serine 217 and serine 223.

It belongs to the serpin family. Ov-serpin subfamily. In terms of tissue distribution, predominantly expressed in mesangial cells. Expressed in the epidermis of the whole body.

The protein localises to the cytoplasm. Its function is as follows. Might function as an inhibitor of Lys-specific proteases. Might influence the maturation of megakaryocytes via its action as a serpin. This is Serpin B7 (SERPINB7) from Homo sapiens (Human).